Here is a 448-residue protein sequence, read N- to C-terminus: Putative F-box/LRR-repeat protein At5g25860 (448 aa).

One can recognise an F-box domain in the interval 11-58; it reads RDAVNCLPDEILAKILSYLPTKRAVSTSLISKRWRNLFALMIQLFESQ. LRR repeat units lie at residues 82–106, 185–214, 215–240, 310–341, and 342–367; these read QESF…SILC, FLHA…FLHD, LRGY…TVHF, TLSL…YFES, and NEKE…VLKG.

The sequence is that of Putative F-box/LRR-repeat protein At5g25860 from Arabidopsis thaliana (Mouse-ear cress).